The following is a 137-amino-acid chain: MDLKPFARTNPFSGLDCLWCREPLTEVDAFRCMVKDFHVVIREGCRYGACTICLENCLATERRLWQGVPVTGEEAELLHGKTLDRLCIRCCYCGGKLTKNEKHRHVLFNEPFCKTRANIIRGRCYDCCRHGSRSKYP.

2 zinc fingers span residues 17-53 (CLWCREPLTEVDAFRCMVKDFHVVIREGCRYGACTIC) and 90-127 (CCYCGGKLTKNEKHRHVLFNEPFCKTRANIIRGRCYDC).

Belongs to the papillomaviridae E6 protein family. As to quaternary structure, forms homodimers. Interacts with ubiquitin-protein ligase UBE3A/E6-AP; this interaction stimulates UBE3A ubiquitin activity. Interacts with host BAK1. Interacts with human FBLN1.

The protein resides in the host cytoplasm. The protein localises to the host nucleus. Functionally, plays a major role in the induction and maintenance of cellular transformation. E6 associates with host UBE3A/E6-AP ubiquitin-protein ligase and modulates its activity. Protects host keratinocytes from apoptosis by mediating the degradation of host BAK1. May also inhibit host immune response. This chain is Protein E6, found in Bos taurus (Bovine).